Here is a 186-residue protein sequence, read N- to C-terminus: RNA-free ribonuclease P (186 aa).

It belongs to the HARP family.

The enzyme catalyses Endonucleolytic cleavage of RNA, removing 5'-extranucleotides from tRNA precursor.. Its function is as follows. RNA-free RNase P that catalyzes the removal of the 5'-leader sequence from pre-tRNA to produce the mature 5'-terminus. The sequence is that of RNA-free ribonuclease P from Hydrogenobaculum sp. (strain Y04AAS1).